A 71-amino-acid polypeptide reads, in one-letter code: UPF0346 protein str0441 (71 aa).

Belongs to the UPF0346 family.

This Streptococcus thermophilus (strain CNRZ 1066) protein is UPF0346 protein str0441.